The following is a 234-amino-acid chain: MRSTAAVLSILLPGALACLGYEGGVPKPTAHYSNSKVIEIAAGQVFDAGWAKYDRGSGACSGDSEGSWQDAVFYLHSGATLKNVIIGKDQAEGVHCDGPCNLEFVWFEDVCEDAITIKNDKAGQETWIVGGGAYHASDKIVQHNGCGTVNIINFYAEDYGKVYRSCGNCSSQCKRNVYVEGVTARDGGEVVGINSNYGDTATLKNVCTDASHPCVLYKGCAGGCEPSKVGYCSG.

Positions 1 to 17 (MRSTAAVLSILLPGALA) are cleaved as a signal peptide. The N-linked (GlcNAc...) asparagine glycan is linked to N168.

The protein belongs to the polysaccharide lyase 3 family. It depends on Ca(2+) as a cofactor.

It is found in the secreted. It catalyses the reaction Eliminative cleavage of (1-&gt;4)-alpha-D-galacturonan to give oligosaccharides with 4-deoxy-alpha-D-galact-4-enuronosyl groups at their non-reducing ends.. Functionally, pectinolytic enzyme consist of four classes of enzymes: pectin lyase, polygalacturonase, pectin methylesterase and rhamnogalacturonase. Among pectinolytic enzymes, pectin lyase is the most important in depolymerization of pectin, since it cleaves internal glycosidic bonds of highly methylated pectins. Favors pectate, the anion, over pectin, the methyl ester. This Aspergillus terreus (strain NIH 2624 / FGSC A1156) protein is Probable pectate lyase F (plyF).